The following is a 446-amino-acid chain: D(1A) dopamine receptor (446 aa).

The Extracellular portion of the chain corresponds to 1–22 (MPLNDTTMDRRGLVVERDFSFR). A glycan (N-linked (GlcNAc...) asparagine) is linked at asparagine 4. Residues 23–48 (ILTACFLSLLILSTLLGNTLVCAAVI) traverse the membrane as a helical segment. Residues 49 to 59 (RFRHLRSKVTN) lie on the Cytoplasmic side of the membrane. The helical transmembrane segment at 60–86 (FFVISLAVSDLLVAVLVMPWKAVAEIA) threads the bilayer. The Extracellular segment spans residues 87 to 95 (GFWPFGSFC). A disulfide bridge connects residues cysteine 95 and cysteine 185. The chain crosses the membrane as a helical span at residues 96–118 (NIWVAFDIMCSTASILNLCVISV). Residues 119–137 (DRYWAISSPFRYERKMTPK) are Cytoplasmic-facing. Residues 138-162 (AAFILISVAWTLSVLISFIPVQLNW) form a helical membrane-spanning segment. At 163–191 (HKARPLSSPDGNVSSQDETMDNCDSSLSR) the chain is on the extracellular side. Residues 192–217 (TYAISSSLISFYIPVAIMIVTYTRIY) traverse the membrane as a helical segment. Residues 218–271 (RIAQKQIRRISALERAAVHAKNCQNTTGNGANVECSQPESSFKMSFKRETKVLK) are Cytoplasmic-facing. A helical transmembrane segment spans residues 272–298 (TLSVIMGVFVCCWLPFFILNCMVPFCE). Over 299 to 315 (SDLPSGETKPFCIDSIT) the chain is Extracellular. The helical transmembrane segment at 316–340 (FDVFVWFGWANSSLNPIIYAFNADF) threads the bilayer. Topologically, residues 341–446 (RKAFSTLLGC…PITQNGQHKT (106 aa)) are cytoplasmic. S-palmitoyl cysteine attachment occurs at residues cysteine 350 and cysteine 354.

This sequence belongs to the G-protein coupled receptor 1 family. Interacts with DNAJC14 via its C-terminus.

The protein localises to the cell membrane. Its subcellular location is the endoplasmic reticulum membrane. The protein resides in the cell projection. It is found in the cilium membrane. It localises to the dendrite. The protein localises to the dendritic spine. This is one of the five types (D1 to D5) of receptors for dopamine. The activity of this receptor is mediated by G proteins which activate adenylyl cyclase. This is D(1A) dopamine receptor (DRD1) from Didelphis virginiana (North American opossum).